Here is a 130-residue protein sequence, read N- to C-terminus: Mitochondrial import protein 1 (130 aa).

Residues 1–41 (MSAEEISNPLAESGVTISSDSEQYSAPESASPQSPSSSSPA) are disordered. Residues 15-24 (VTISSDSEQY) are compositionally biased toward polar residues. Positions 25–41 (SAPESASPQSPSSSSPA) are enriched in low complexity.

This sequence belongs to the MIM1 family.

The protein localises to the mitochondrion outer membrane. Required for the assembly of the TOM (translocase of outer membrane) receptor complex, which is responsible for the recognition and translocation of cytosolically synthesized mitochondrial preproteins. The sequence is that of Mitochondrial import protein 1 from Neurospora crassa (strain ATCC 24698 / 74-OR23-1A / CBS 708.71 / DSM 1257 / FGSC 987).